A 960-amino-acid polypeptide reads, in one-letter code: Isoleucine--tRNA ligase (960 aa).

The short motif at 82-92 is the 'HIGH' region element; that stretch reads PYANGHIHIGH. Glu-606 contributes to the L-isoleucyl-5'-AMP binding site. The 'KMSKS' region motif lies at 647 to 651; sequence KMSKS. Lys-650 lines the ATP pocket. Zn(2+) is bound by residues Cys-931, Cys-934, Cys-951, and Cys-954.

The protein belongs to the class-I aminoacyl-tRNA synthetase family. IleS type 1 subfamily. In terms of assembly, monomer. It depends on Zn(2+) as a cofactor.

The protein localises to the cytoplasm. The catalysed reaction is tRNA(Ile) + L-isoleucine + ATP = L-isoleucyl-tRNA(Ile) + AMP + diphosphate. Catalyzes the attachment of isoleucine to tRNA(Ile). As IleRS can inadvertently accommodate and process structurally similar amino acids such as valine, to avoid such errors it has two additional distinct tRNA(Ile)-dependent editing activities. One activity is designated as 'pretransfer' editing and involves the hydrolysis of activated Val-AMP. The other activity is designated 'posttransfer' editing and involves deacylation of mischarged Val-tRNA(Ile). The sequence is that of Isoleucine--tRNA ligase from Gluconobacter oxydans (strain 621H) (Gluconobacter suboxydans).